Reading from the N-terminus, the 208-residue chain is Protein-L-isoaspartate O-methyltransferase (208 aa).

Ser59 is an active-site residue.

It belongs to the methyltransferase superfamily. L-isoaspartyl/D-aspartyl protein methyltransferase family.

Its subcellular location is the cytoplasm. It carries out the reaction [protein]-L-isoaspartate + S-adenosyl-L-methionine = [protein]-L-isoaspartate alpha-methyl ester + S-adenosyl-L-homocysteine. In terms of biological role, catalyzes the methyl esterification of L-isoaspartyl residues in peptides and proteins that result from spontaneous decomposition of normal L-aspartyl and L-asparaginyl residues. It plays a role in the repair and/or degradation of damaged proteins. The polypeptide is Protein-L-isoaspartate O-methyltransferase (Sodalis glossinidius (strain morsitans)).